Reading from the N-terminus, the 803-residue chain is Homeobox protein Wariai (803 aa).

Positions 23 to 41 (SDYDSYEQQYNNPTGSKQY) are enriched in polar residues. Positions 23-144 (SDYDSYEQQY…PTPYSSNSFS (122 aa)) are disordered. The span at 42-124 (NNNNNNNTNT…NNNNNNNNNN (83 aa)) shows a compositional bias: low complexity. Residues 125–138 (QHLSQSQQLSPTPY) are compositionally biased toward polar residues. The segment at residues 162-221 (SKKKRKRTSPDQLKLLEKIFMAHQHPNLNLRSQLAVELHMTARSVQIWFQNRRAKARNME) is a DNA-binding region (homeobox). The disordered stretch occupies residues 288 to 330 (INGNMGGGGGGGGGSHNHHHHNHNHNHHNHNHNHNHNQPLSNG). The segment covering 291 to 302 (NMGGGGGGGGGS) has biased composition (gly residues). Positions 303–322 (HNHHHHNHNHNHHNHNHNHN) are enriched in basic residues. ANK repeat units follow at residues 374–403 (KGLS…NPNI), 407–436 (QGNT…DPNL), 440–469 (EGVS…EVSV), 474–503 (NGET…KASV), 507–536 (NNRT…DMNA), 540–569 (DGHT…DPNI), 573–602 (EGYT…KLNI), 606–636 (NGQN…EIAA), and 642–671 (QGYT…SKKI). The segment at 695 to 760 (KSSNNNNSNS…PPGNKFEEDD (66 aa)) is disordered. Residues 696-746 (SSNNNNSNSNINNINNINNINNINSQPNTNSDNNNNNNNNNFNENYSNGNN) are compositionally biased toward low complexity.

It is found in the nucleus. Its function is as follows. Putative transcription factor, that seems to be involved in anterior-posterior patterning of the slug, probably by controlling the proportions of prestalk and prespore cells. The polypeptide is Homeobox protein Wariai (warA) (Dictyostelium discoideum (Social amoeba)).